A 386-amino-acid polypeptide reads, in one-letter code: MSKRDYYEVLGVERGVDEKALKSAYRKLAMKYHPDQNAGDTAAEDKFKEVGEAYAILSDPQKRAAYDRYGHGAFENGGMGGGSPFGGQGGNPEDIFQDLFSQVFGAGGFAGGRRRSGPQRGADLRYDLEITLEEAFYGKDETIHVPQAVACRPCEGTGAAPGTKPETCETCGGHGRVRAQQGFFTMERTCHICQGRGQIIRKPCKTCGGHGQVKEERKLQVKIPAGVESGMRIRLSGEGEPGTSGGPKGDLYIFVEVVEHDIFERDGPNLYCRAPVPMTTAALGGEIDIPTIDGGRARVAIPEGAQTGRKLRLRSKGMPSVRANGQTGDLYVEMFVETPQNLTARQKDLLRQFCDCSGADCHPESEGFLGKIKRFWGGEGDEKRPV.

The 66-residue stretch at 5–70 folds into the J domain; the sequence is DYYEVLGVER…QKRAAYDRYG (66 aa). Residues 138–216 form a CR-type zinc finger; sequence GKDETIHVPQ…CGGHGQVKEE (79 aa). Zn(2+) contacts are provided by Cys-151, Cys-154, Cys-168, Cys-171, Cys-190, Cys-193, Cys-204, and Cys-207. CXXCXGXG motif repeat units lie at residues 151 to 158, 168 to 175, 190 to 197, and 204 to 211; these read CRPCEGTG, CETCGGHG, CHICQGRG, and CKTCGGHG.

This sequence belongs to the DnaJ family. In terms of assembly, homodimer. Zn(2+) serves as cofactor.

It localises to the cytoplasm. Functionally, participates actively in the response to hyperosmotic and heat shock by preventing the aggregation of stress-denatured proteins and by disaggregating proteins, also in an autonomous, DnaK-independent fashion. Unfolded proteins bind initially to DnaJ; upon interaction with the DnaJ-bound protein, DnaK hydrolyzes its bound ATP, resulting in the formation of a stable complex. GrpE releases ADP from DnaK; ATP binding to DnaK triggers the release of the substrate protein, thus completing the reaction cycle. Several rounds of ATP-dependent interactions between DnaJ, DnaK and GrpE are required for fully efficient folding. Also involved, together with DnaK and GrpE, in the DNA replication of plasmids through activation of initiation proteins. This is Chaperone protein DnaJ from Hyphomonas neptunium (strain ATCC 15444).